Consider the following 230-residue polypeptide: Large ribosomal subunit protein uL1 (230 aa).

This sequence belongs to the universal ribosomal protein uL1 family. As to quaternary structure, part of the 50S ribosomal subunit.

In terms of biological role, binds directly to 23S rRNA. The L1 stalk is quite mobile in the ribosome, and is involved in E site tRNA release. Protein L1 is also a translational repressor protein, it controls the translation of the L11 operon by binding to its mRNA. The chain is Large ribosomal subunit protein uL1 from Bradyrhizobium sp. (strain BTAi1 / ATCC BAA-1182).